The following is a 495-amino-acid chain: Histidine--tRNA ligase (495 aa).

It belongs to the class-II aminoacyl-tRNA synthetase family. As to quaternary structure, homodimer.

It localises to the cytoplasm. It carries out the reaction tRNA(His) + L-histidine + ATP = L-histidyl-tRNA(His) + AMP + diphosphate + H(+). The polypeptide is Histidine--tRNA ligase (Bartonella henselae (strain ATCC 49882 / DSM 28221 / CCUG 30454 / Houston 1) (Rochalimaea henselae)).